A 598-amino-acid polypeptide reads, in one-letter code: Elongation factor 4 (598 aa).

Positions 4–186 constitute a tr-type G domain; the sequence is INIRNFAIIA…AIVSRLPAPS (183 aa). GTP is bound by residues 16–21 and 133–136; these read DHGKST and NKID.

The protein belongs to the TRAFAC class translation factor GTPase superfamily. Classic translation factor GTPase family. LepA subfamily.

Its subcellular location is the cell inner membrane. The catalysed reaction is GTP + H2O = GDP + phosphate + H(+). In terms of biological role, required for accurate and efficient protein synthesis under certain stress conditions. May act as a fidelity factor of the translation reaction, by catalyzing a one-codon backward translocation of tRNAs on improperly translocated ribosomes. Back-translocation proceeds from a post-translocation (POST) complex to a pre-translocation (PRE) complex, thus giving elongation factor G a second chance to translocate the tRNAs correctly. Binds to ribosomes in a GTP-dependent manner. In Ehrlichia ruminantium (strain Welgevonden), this protein is Elongation factor 4.